Consider the following 334-residue polypeptide: Acryloyl-coenzyme A reductase (334 aa).

Zn(2+) is bound at residue Cys38. An NADP(+)-binding site is contributed by Tyr39. Residues His60, Asp90, Cys93, Cys96, Cys104, and Cys146 each contribute to the Zn(2+) site. NADP(+) contacts are provided by residues 173-176 (SGGV) and 195-197 (TTS).

It belongs to the zinc-containing alcohol dehydrogenase family. Monomer. Zn(2+) is required as a cofactor.

It catalyses the reaction propanoyl-CoA + NADP(+) = acryloyl-CoA + NADPH + H(+). Its function is as follows. Plays a role in autotrophic carbon fixation via the 3-hydroxypropionate/4-hydroxybutyrate cycle. Catalyzes the acryloyl-CoA dependent NADPH oxidation and formation of propionyl-CoA. Inactive towards 3-hydroxypropionyl-CoA, NADH and crotonyl-CoA. This is Acryloyl-coenzyme A reductase from Sulfurisphaera tokodaii (strain DSM 16993 / JCM 10545 / NBRC 100140 / 7) (Sulfolobus tokodaii).